A 209-amino-acid polypeptide reads, in one-letter code: Small ribosomal subunit protein uS4 (209 aa).

The S4 RNA-binding domain occupies 98–164 (SRLDNVVYRG…TPFIVARETA (67 aa)).

It belongs to the universal ribosomal protein uS4 family. Part of the 30S ribosomal subunit. Contacts protein S5. The interaction surface between S4 and S5 is involved in control of translational fidelity.

In terms of biological role, one of the primary rRNA binding proteins, it binds directly to 16S rRNA where it nucleates assembly of the body of the 30S subunit. With S5 and S12 plays an important role in translational accuracy. The polypeptide is Small ribosomal subunit protein uS4 (Frankia alni (strain DSM 45986 / CECT 9034 / ACN14a)).